The following is a 600-amino-acid chain: Aspartate--tRNA(Asp/Asn) ligase (600 aa).

Residue Glu-174 participates in L-aspartate binding. The segment at 198-201 is aspartate; that stretch reads QLFK. An L-aspartate-binding site is contributed by Arg-220. ATP contacts are provided by residues 220–222 and Gln-229; that span reads RDE. His-457 is an L-aspartate binding site. Glu-491 is a binding site for ATP. An L-aspartate-binding site is contributed by Arg-498. Residue 543–546 participates in ATP binding; that stretch reads GLDR.

It belongs to the class-II aminoacyl-tRNA synthetase family. Type 1 subfamily. Homodimer.

The protein resides in the cytoplasm. It carries out the reaction tRNA(Asx) + L-aspartate + ATP = L-aspartyl-tRNA(Asx) + AMP + diphosphate. Functionally, aspartyl-tRNA synthetase with relaxed tRNA specificity since it is able to aspartylate not only its cognate tRNA(Asp) but also tRNA(Asn). Reaction proceeds in two steps: L-aspartate is first activated by ATP to form Asp-AMP and then transferred to the acceptor end of tRNA(Asp/Asn). This chain is Aspartate--tRNA(Asp/Asn) ligase, found in Burkholderia orbicola (strain MC0-3).